We begin with the raw amino-acid sequence, 170 residues long: Cytochrome b6-f complex subunit 4 (170 aa).

The next 3 membrane-spanning stretches (helical) occupy residues Leu46 to Val66, Leu105 to Glu125, and Thr141 to Leu161.

Belongs to the cytochrome b family. PetD subfamily. The 4 large subunits of the cytochrome b6-f complex are cytochrome b6, subunit IV (17 kDa polypeptide, PetD), cytochrome f and the Rieske protein, while the 4 small subunits are PetG, PetL, PetM and PetN. The complex functions as a dimer.

The protein localises to the cellular thylakoid membrane. Component of the cytochrome b6-f complex, which mediates electron transfer between photosystem II (PSII) and photosystem I (PSI), cyclic electron flow around PSI, and state transitions. This is Cytochrome b6-f complex subunit 4 from Synechococcus sp. (strain JA-3-3Ab) (Cyanobacteria bacterium Yellowstone A-Prime).